Here is a 242-residue protein sequence, read N- to C-terminus: 7-cyano-7-deazaguanine synthase (242 aa).

Positions 1–25 are disordered; that stretch reads MNSRKDKNSKGKNSDTKRKKSSQEN. An ATP-binding site is contributed by 32 to 42; it reads LSGGLDSTTCL. Residues Cys212, Cys221, Cys224, and Cys227 each coordinate Zn(2+).

Belongs to the QueC family. Zn(2+) is required as a cofactor.

It catalyses the reaction 7-carboxy-7-deazaguanine + NH4(+) + ATP = 7-cyano-7-deazaguanine + ADP + phosphate + H2O + H(+). Its pathway is purine metabolism; 7-cyano-7-deazaguanine biosynthesis. In terms of biological role, catalyzes the ATP-dependent conversion of 7-carboxy-7-deazaguanine (CDG) to 7-cyano-7-deazaguanine (preQ(0)). The sequence is that of 7-cyano-7-deazaguanine synthase from Leptospira borgpetersenii serovar Hardjo-bovis (strain JB197).